The following is a 292-amino-acid chain: uncharacterized protein (292 aa).

The protein belongs to the glycosyltransferase 2 family. WaaE/KdtX subfamily.

This is an uncharacterized protein from Rickettsia typhi (strain ATCC VR-144 / Wilmington).